We begin with the raw amino-acid sequence, 1134 residues long: Translation initiation factor IF-2 (1134 aa).

2 disordered regions span residues 55–465 (AQKS…HIIG) and 491–524 (LARP…QRQR). 5 stretches are compositionally biased toward polar residues: residues 56-65 (QKSSNSSSPP), 83-105 (SPPT…SSLK), 137-147 (PSISKNNSLKV), 208-234 (QIKQ…IQTN), and 251-264 (VQSQ…NNNL). Basic and acidic residues-rich tracts occupy residues 391-403 (KRGD…KKDG) and 438-450 (PDWD…EALR). Composition is skewed to basic residues over residues 495-504 (GKPKASKKSG) and 511-524 (LRKR…QRQR). Residues 626 to 798 (RRPPVVTVMG…ILLVTEVEDL (173 aa)) form the tr-type G domain. The segment at 635–642 (GHVDHGKT) is G1. 635–642 (GHVDHGKT) contacts GTP. The tract at residues 660 to 664 (GITQH) is G2. The interval 685-688 (DTPG) is G3. GTP-binding positions include 685-689 (DTPGH) and 739-742 (NKID). The G4 stretch occupies residues 739–742 (NKID). The tract at residues 775-777 (SAI) is G5.

It belongs to the TRAFAC class translation factor GTPase superfamily. Classic translation factor GTPase family. IF-2 subfamily.

It is found in the cytoplasm. One of the essential components for the initiation of protein synthesis. Protects formylmethionyl-tRNA from spontaneous hydrolysis and promotes its binding to the 30S ribosomal subunits. Also involved in the hydrolysis of GTP during the formation of the 70S ribosomal complex. The protein is Translation initiation factor IF-2 of Prochlorococcus marinus (strain SARG / CCMP1375 / SS120).